We begin with the raw amino-acid sequence, 1037 residues long: PH and SEC7 domain-containing protein 3 (1037 aa).

The disordered stretch occupies residues 37–70; sequence EEKTPDSSDHGGSTLLPPTVTNEFPEYGTMEEGG. A Phosphoserine modification is found at serine 76. 5 disordered regions span residues 169-189, 236-255, 262-284, 304-335, and 353-375; these read TASH…GKSP, RVPE…HNPV, REQR…SMGR, EAES…ACGV, and APSE…ESGE. A compositionally biased stretch (low complexity) spans 237 to 251; it reads VPESACPVSSSSAGS. Positions 262–277 are enriched in basic and acidic residues; sequence REQRSDLGREHPRGYD. Positions 515-723 constitute an SEC7 domain; it reads NSVYTRGPQE…KALYNSIKNE (209 aa). Residues 730–747 are compositionally biased toward basic and acidic residues; the sequence is DDEEKKKSPSEGTDEKAN. The interval 730–762 is disordered; that stretch reads DDEEKKKSPSEGTDEKANGTHPKTISRIGSTTN. The segment covering 750–762 has biased composition (polar residues); sequence HPKTISRIGSTTN. Serine 759 carries the phosphoserine modification. A PH domain is found at 774 to 887; it reads AVYKSGFLAR…WINKINCVAA (114 aa). Residues 911-941 adopt a coiled-coil conformation; the sequence is ATTTKLSQEEQLKSHESKLKQITTELAEHRS. A disordered region spans residues 984–1037; sequence LLTTDGNEPVGLKKSHSSPSLNPDASPVTAKVKRNVSERKDHRPETPGIKQKVT. Residues serine 998, serine 1000, serine 1001, serine 1003, and serine 1009 each carry the phosphoserine modification. The span at 1018–1028 shows a compositional bias: basic and acidic residues; the sequence is NVSERKDHRPE.

As to expression, ubiquitously expressed, with highest levels in liver. Present in brain, with highest levels in olfactory bulb, cortex, hippocampal pyramidal cell layer and cerebellar granule cell layer (at protein level).

It localises to the cell membrane. The protein resides in the cell projection. The protein localises to the ruffle membrane. Its subcellular location is the postsynaptic density. In terms of biological role, guanine nucleotide exchange factor for ARF6. This is PH and SEC7 domain-containing protein 3 (Psd3) from Mus musculus (Mouse).